A 120-amino-acid chain; its full sequence is Small ribosomal subunit protein uS13 (120 aa).

The segment at 93–120 is disordered; that stretch reads RKGLPVRGQTTKNNARTRKGKKKTVGSK. A compositionally biased stretch (basic residues) spans 107–120; it reads ARTRKGKKKTVGSK.

This sequence belongs to the universal ribosomal protein uS13 family. As to quaternary structure, part of the 30S ribosomal subunit. Forms a loose heterodimer with protein S19. Forms two bridges to the 50S subunit in the 70S ribosome.

In terms of biological role, located at the top of the head of the 30S subunit, it contacts several helices of the 16S rRNA. In the 70S ribosome it contacts the 23S rRNA (bridge B1a) and protein L5 of the 50S subunit (bridge B1b), connecting the 2 subunits; these bridges are implicated in subunit movement. Contacts the tRNAs in the A and P-sites. This chain is Small ribosomal subunit protein uS13, found in Helicobacter acinonychis (strain Sheeba).